A 1338-amino-acid polypeptide reads, in one-letter code: Centrosomal P4.1-associated protein (1338 aa).

The tract at residues 190 to 211 is disordered; it reads GLSLLPDDQSQKHRSPGNTTTG. A phosphoserine mark is found at Ser-260 and Ser-316. Residues 319 to 394 form an alpha/beta-tubulin binding region; sequence VANIEERPIK…FTNAKSKFQK (76 aa). Disordered stretches follow at residues 386–414, 436–479, and 521–551; these read TNAK…PLFK, PILK…QTGK, and QGKD…ESES. Over residues 400-409 the composition is skewed to polar residues; sequence LVTNQSTSED. Ser-540 is modified (phosphoserine). Basic and acidic residues predominate over residues 541–550; the sequence is PIRETMKESE. Ser-589 bears the Phosphoserine; by PLK2 mark. Ser-595 carries the phosphoserine; by PLK2 and PLK4 modification. Disordered regions lie at residues 611-789, 845-865, and 1096-1153; these read HRMS…LSLS, VKRG…TSEL, and YLPM…QGEI. The span at 635–650 shows a compositional bias: basic and acidic residues; it reads NRSEDLDHTAREKESE. Polar residues predominate over residues 679–689; the sequence is QKSTSENQTEW. The segment covering 717–764 has biased composition (basic and acidic residues); that stretch reads STEDRERGISSREDSPQVCDDKGPFKDTRTQEDKRRDVDLDLSDKDYS. Ser-759 bears the Phosphoserine mark. An interaction with STIL region spans residues 895 to 1338; it reads QPPGDNARSQ…EGNVLMDTEL (444 aa). A compositionally biased stretch (acidic residues) spans 1140–1149; that stretch reads YKEEEEDQDI.

This sequence belongs to the TCP10 family. As to quaternary structure, forms homodimers. Associates with microtubules plus ends; binds to beta-tubulin subunits exposed on microtubule outer surface at its distal tip; also associates with microtubule lattice. Associated with the gamma-tubulin complex. Interacts with the head domain of EPB41. Interacts with LYST. Interacts with CEP152 (via C-terminus). Interacts with STIL. Forms a complex with STIL and SASS6. In terms of processing, phosphorylation at Ser-589 and Ser-595 by PLK2 is required for procentriole formation and centriole elongation. Phosphorylation by PLK2 oscillates during the cell cycle: it increases at G1/S transition and decreases during the exit from mitosis. Phosphorylation at Ser-595 is also mediated by PLK4 but is not a critical step in PLK4 function in procentriole assembly.

The protein resides in the cytoplasm. Its subcellular location is the cytoskeleton. The protein localises to the microtubule organizing center. It localises to the centrosome. It is found in the centriole. In terms of biological role, plays an important role in cell division and centrosome function by participating in centriole duplication. Inhibits microtubule nucleation from the centrosome. Involved in the regulation of slow processive growth of centriolar microtubules. Acts as a microtubule plus-end tracking protein that stabilizes centriolar microtubules and inhibits microtubule polymerization and extension from the distal ends of centrioles. Required for centriole elongation and for STIL-mediated centriole amplification. Required for the recruitment of CEP295 to the proximal end of new-born centrioles at the centriolar microtubule wall during early S phase in a PLK4-dependent manner. May be involved in the control of centriolar-microtubule growth by acting as a regulator of tubulin release. The protein is Centrosomal P4.1-associated protein of Homo sapiens (Human).